Consider the following 116-residue polypeptide: Large ribosomal subunit protein bL19 (116 aa).

It belongs to the bacterial ribosomal protein bL19 family.

Functionally, this protein is located at the 30S-50S ribosomal subunit interface and may play a role in the structure and function of the aminoacyl-tRNA binding site. This chain is Large ribosomal subunit protein bL19, found in Pseudomonas savastanoi pv. phaseolicola (strain 1448A / Race 6) (Pseudomonas syringae pv. phaseolicola (strain 1448A / Race 6)).